The following is a 174-amino-acid chain: Actin-related protein 2/3 complex subunit 3 (174 aa).

It belongs to the ARPC3 family. In terms of assembly, component of the Arp2/3 complex composed of arp2, act2, arc1/p41-ARC, arc2/p34-ARC, arc3/p21-ARC, arc4/p20-ARC and arc5/p16-ARC.

It is found in the cytoplasm. Its subcellular location is the cytoskeleton. It localises to the actin patch. Functionally, functions as a component of the Arp2/3 complex which is involved in regulation of actin polymerization and together with an activating nucleation-promoting factor (NPF) mediates the formation of branched actin networks. This is Actin-related protein 2/3 complex subunit 3 (arc3) from Schizosaccharomyces pombe (strain 972 / ATCC 24843) (Fission yeast).